We begin with the raw amino-acid sequence, 179 residues long: Large ribosomal subunit protein uL5 (179 aa).

The protein belongs to the universal ribosomal protein uL5 family. As to quaternary structure, part of the 50S ribosomal subunit; part of the 5S rRNA/L5/L18/L25 subcomplex. Contacts the 5S rRNA and the P site tRNA. Forms a bridge to the 30S subunit in the 70S ribosome.

Its function is as follows. This is one of the proteins that bind and probably mediate the attachment of the 5S RNA into the large ribosomal subunit, where it forms part of the central protuberance. In the 70S ribosome it contacts protein S13 of the 30S subunit (bridge B1b), connecting the 2 subunits; this bridge is implicated in subunit movement. Contacts the P site tRNA; the 5S rRNA and some of its associated proteins might help stabilize positioning of ribosome-bound tRNAs. This chain is Large ribosomal subunit protein uL5, found in Rickettsia prowazekii (strain Madrid E).